The following is a 333-amino-acid chain: Beta-ketoacyl-[acyl-carrier-protein] synthase III (333 aa).

Catalysis depends on residues C117 and H257. The tract at residues 258–262 (QANLR) is ACP-binding. The active site involves N287.

This sequence belongs to the thiolase-like superfamily. FabH family. In terms of assembly, homodimer.

The protein localises to the cytoplasm. It catalyses the reaction malonyl-[ACP] + acetyl-CoA + H(+) = 3-oxobutanoyl-[ACP] + CO2 + CoA. Its pathway is lipid metabolism; fatty acid biosynthesis. Its function is as follows. Catalyzes the condensation reaction of fatty acid synthesis by the addition to an acyl acceptor of two carbons from malonyl-ACP. Catalyzes the first condensation reaction which initiates fatty acid synthesis and may therefore play a role in governing the total rate of fatty acid production. Possesses both acetoacetyl-ACP synthase and acetyl transacylase activities. Its substrate specificity determines the biosynthesis of branched-chain and/or straight-chain of fatty acids. The polypeptide is Beta-ketoacyl-[acyl-carrier-protein] synthase III (Azobacteroides pseudotrichonymphae genomovar. CFP2).